The sequence spans 140 residues: MAVQYETKATNVGGRKGHVHTDDNAINVDVLPPQQADGKATNPEQLFAAGYASCFNGAFDLILKQNKVRDAEPEVTLTVRLEDDPDAESPKLSVDIHAKVKNVLSQEDAEKYLQDAHDFCPYSKATRGNIDVNLNVEVVE.

This sequence belongs to the OsmC/Ohr family.

The polypeptide is Organic hydroperoxide resistance protein-like 1 (Staphylococcus epidermidis (strain ATCC 35984 / DSM 28319 / BCRC 17069 / CCUG 31568 / BM 3577 / RP62A)).